Here is a 369-residue protein sequence, read N- to C-terminus: Flagellar P-ring protein (369 aa).

An N-terminal signal peptide occupies residues 1–24 (MSKTISLLKFIICILISLCSFTYA).

It belongs to the FlgI family. In terms of assembly, the basal body constitutes a major portion of the flagellar organelle and consists of four rings (L,P,S, and M) mounted on a central rod.

The protein localises to the bacterial flagellum basal body. Functionally, assembles around the rod to form the L-ring and probably protects the motor/basal body from shearing forces during rotation. The protein is Flagellar P-ring protein of Buchnera aphidicola subsp. Schizaphis graminum (strain Sg).